A 373-amino-acid polypeptide reads, in one-letter code: XK-related protein 9 (373 aa).

8 helical membrane-spanning segments follow: residues 8–28 (FMMS…DIVL), 38–58 (YVLG…VHCF), 166–186 (MVIM…QIAL), 206–226 (LFYK…LLFV), 230–250 (VALL…FINH), 256–276 (SVSM…FTFF), 295–315 (VLGT…IFNS), and 318–338 (FIPI…FLGV).

The protein belongs to the XK family. Post-translationally, undergoes proteolytic processing by caspase-3 (CASP3), caspase-6 (CASP6) and caspase-7 (CASP7) to generate the XK-related protein 9, processed form, leading to its activation. In terms of tissue distribution, highly expressed in the small intestines; weakly expressed in the pancreas, liver, stomach, and large intestines.

The protein localises to the cell membrane. It carries out the reaction a 1,2-diacyl-sn-glycero-3-phospho-L-serine(in) = a 1,2-diacyl-sn-glycero-3-phospho-L-serine(out). Its activity is regulated as follows. Activated upon caspase cleavage to generate the XK-related protein 9, processed form. Does not act prior the onset of apoptosis. Functionally, phospholipid scramblase that promotes phosphatidylserine exposure on apoptotic cell surface. Phosphatidylserine is a specific marker only present at the surface of apoptotic cells and acts as a specific signal for engulfment. This Mus musculus (Mouse) protein is XK-related protein 9.